Reading from the N-terminus, the 235-residue chain is Leucyl/phenylalanyl-tRNA--protein transferase (235 aa).

The protein belongs to the L/F-transferase family.

Its subcellular location is the cytoplasm. The catalysed reaction is N-terminal L-lysyl-[protein] + L-leucyl-tRNA(Leu) = N-terminal L-leucyl-L-lysyl-[protein] + tRNA(Leu) + H(+). The enzyme catalyses N-terminal L-arginyl-[protein] + L-leucyl-tRNA(Leu) = N-terminal L-leucyl-L-arginyl-[protein] + tRNA(Leu) + H(+). It carries out the reaction L-phenylalanyl-tRNA(Phe) + an N-terminal L-alpha-aminoacyl-[protein] = an N-terminal L-phenylalanyl-L-alpha-aminoacyl-[protein] + tRNA(Phe). Functionally, functions in the N-end rule pathway of protein degradation where it conjugates Leu, Phe and, less efficiently, Met from aminoacyl-tRNAs to the N-termini of proteins containing an N-terminal arginine or lysine. This is Leucyl/phenylalanyl-tRNA--protein transferase from Anaeromyxobacter sp. (strain Fw109-5).